We begin with the raw amino-acid sequence, 78 residues long: RNA-binding protein KhpA (78 aa).

The region spanning 29–78 (TIIYELSVAKPDIGKIIGKEGRTIKAIRTLLVSVASRNNVRVSLEIMEEK) is the KH domain.

The protein belongs to the KhpA RNA-binding protein family.

It localises to the cytoplasm. Its function is as follows. A probable RNA-binding protein. This Chlamydia pneumoniae (Chlamydophila pneumoniae) protein is RNA-binding protein KhpA.